The sequence spans 273 residues: Thiazole synthase (273 aa).

Lys110 serves as the catalytic Schiff-base intermediate with DXP. Residues Gly171, 198–199 (AG), and 220–221 (NS) contribute to the 1-deoxy-D-xylulose 5-phosphate site.

The protein belongs to the ThiG family. In terms of assembly, homotetramer. Forms heterodimers with either ThiH or ThiS.

The protein resides in the cytoplasm. It catalyses the reaction [ThiS sulfur-carrier protein]-C-terminal-Gly-aminoethanethioate + 2-iminoacetate + 1-deoxy-D-xylulose 5-phosphate = [ThiS sulfur-carrier protein]-C-terminal Gly-Gly + 2-[(2R,5Z)-2-carboxy-4-methylthiazol-5(2H)-ylidene]ethyl phosphate + 2 H2O + H(+). Its pathway is cofactor biosynthesis; thiamine diphosphate biosynthesis. Functionally, catalyzes the rearrangement of 1-deoxy-D-xylulose 5-phosphate (DXP) to produce the thiazole phosphate moiety of thiamine. Sulfur is provided by the thiocarboxylate moiety of the carrier protein ThiS. In vitro, sulfur can be provided by H(2)S. This chain is Thiazole synthase, found in Hydrogenovibrio crunogenus (strain DSM 25203 / XCL-2) (Thiomicrospira crunogena).